The sequence spans 388 residues: 5-hydroxytryptamine receptor 4 (388 aa).

At 1–19 (MDKLDANVSSKEGFGSVEK) the chain is on the extracellular side. An N-linked (GlcNAc...) asparagine glycan is attached at asparagine 7. Residues 20–44 (VVLLTFLSAVILMAILGNLLVMVAV) form a helical membrane-spanning segment. Residues 45–54 (CRDRQLRKIK) lie on the Cytoplasmic side of the membrane. The helical transmembrane segment at 55 to 78 (TNYFIVSLAFADLLVSVLVMPFGA) threads the bilayer. Over 79–92 (IELVQDIWVYGEMF) the chain is Extracellular. A helical transmembrane segment spans residues 93–117 (CLVRTSLDVLLTTASIFHLCCISLD). Cysteine 93 and cysteine 184 are oxidised to a cystine. Aspartate 100 serves as a coordination point for serotonin. The Cytoplasmic segment spans residues 118–133 (RYYAICCQPLVYRNKM). A helical membrane pass occupies residues 134–157 (TPLRIALMLGGCWVIPMFISFLPI). Residues 158–188 (MQGWNNIGIVDLIEKRKFNQNSNSTYCVFMV) are Extracellular-facing. Residues 189-212 (NKPYAITCSVVAFYIPFLLMVLAY) form a helical membrane-spanning segment. The Cytoplasmic segment spans residues 213–257 (YRIYVTAKEHARQIQVLQRAGAPAEGRPQPADQHSTHRMRTETKA). The chain crosses the membrane as a helical span at residues 258–283 (AKTLCIIMGCFCLCWAPFFVTNIVDP). A serotonin-binding site is contributed by asparagine 279. The Extracellular segment spans residues 284–290 (FIDYTVP). A helical membrane pass occupies residues 291-314 (GQLWTAFLWLGYINSGLNPFLYAF). Over 315–388 (LNKSFRRAFL…PLVAAQPIDT (74 aa)) the chain is Cytoplasmic.

Belongs to the G-protein coupled receptor 1 family. Interacts (via C-terminus 330-346 AA) with GRK5; this interaction is promoted by 5-HT (serotonin).

The protein localises to the cell membrane. It is found in the endosome membrane. G-protein coupled receptor for 5-hydroxytryptamine (serotonin), a biogenic hormone that functions as a neurotransmitter, a hormone and a mitogen. Ligand binding causes a conformation change that triggers signaling via guanine nucleotide-binding proteins (G proteins) and modulates the activity of downstream effectors. HTR4 is coupled to G(s) G alpha proteins and mediates activation of adenylate cyclase activity. This chain is 5-hydroxytryptamine receptor 4 (HTR4), found in Cavia porcellus (Guinea pig).